A 181-amino-acid polypeptide reads, in one-letter code: Oligoribonuclease (181 aa).

The 164-residue stretch at 8 to 171 folds into the Exonuclease domain; the sequence is LVWIDMEMTG…DDIRESIAEL (164 aa). Residue tyrosine 129 is part of the active site.

This sequence belongs to the oligoribonuclease family.

The protein resides in the cytoplasm. Functionally, 3'-to-5' exoribonuclease specific for small oligoribonucleotides. The chain is Oligoribonuclease from Pseudoalteromonas atlantica (strain T6c / ATCC BAA-1087).